We begin with the raw amino-acid sequence, 193 residues long: Bcl-2-like protein 2 (193 aa).

A2 is subject to N-acetylalanine. The BH4 signature appears at 9–29 (DTRALVADFVGYKLRQKGYVC). The BH1 motif lies at 85–104 (ELFQGGPNWGRLVAFFVFGA). The BH2 signature appears at 136–151 (DWIHSSGGWAEFTALY).

The protein belongs to the Bcl-2 family. In terms of assembly, interacts with HIF3A (via C-terminus domain). Interacts with BOP.

Its subcellular location is the mitochondrion membrane. Promotes cell survival. Blocks dexamethasone-induced apoptosis. Mediates survival of postmitotic Sertoli cells by suppressing death-promoting activity of BAX. This is Bcl-2-like protein 2 (BCL2L2) from Bos taurus (Bovine).